The primary structure comprises 1226 residues: Probable phosphorylase b kinase regulatory subunit alpha (1226 aa).

The disordered stretch occupies residues 666-688 (NEKITTPRGPRTLRRGESVKDRS). A compositionally biased stretch (basic and acidic residues) spans 679 to 688 (RRGESVKDRS).

The protein belongs to the phosphorylase b kinase regulatory chain family.

It functions in the pathway glycan biosynthesis; glycogen metabolism. Phosphorylase b kinase catalyzes the phosphorylation of serine in certain substrates, including troponin I. The alpha chain may bind calmodulin. This is Probable phosphorylase b kinase regulatory subunit alpha from Caenorhabditis elegans.